Here is a 306-residue protein sequence, read N- to C-terminus: MSTLGHQYDNSLVSNAFGFLRLPMNFQPYDSDADWVITGVPFDMATSGRAGGRHGPAAIRQVSTNLAWEHNRFPWNFDMRERLNVVDCGDLVYAFGDAREMSEKLQAHAEKLLAAGKRMLTFGGDHFVTLPLLRAHAKHFGKMALVHFDAHTDTYANGCEFDHGTMFYTAPKEGLIDPNHSVQIGIRTEFDKDNGFTVLDACQVNDRSVDDVIAQVKQIVGDMPVYLTFDIDCLDPAFAPGTGTPVIGGLTSDRAIKLVRGLKDLNIVGMDVVEVAPAYDQSEITALAAATLALEMLYIQAAKKGE.

Mn(2+) is bound by residues histidine 126, aspartate 149, histidine 151, aspartate 153, aspartate 230, and aspartate 232.

It belongs to the arginase family. Agmatinase subfamily. The cofactor is Mn(2+).

It catalyses the reaction agmatine + H2O = urea + putrescine. Its pathway is amine and polyamine biosynthesis; putrescine biosynthesis via agmatine pathway; putrescine from agmatine: step 1/1. In terms of biological role, catalyzes the formation of putrescine from agmatine. The protein is Agmatinase of Shigella sonnei (strain Ss046).